A 68-amino-acid chain; its full sequence is DNA-directed RNA polymerase subunit omega (68 aa).

The protein belongs to the RNA polymerase subunit omega family. In terms of assembly, the RNAP catalytic core consists of 2 alpha, 1 beta, 1 beta' and 1 omega subunit. When a sigma factor is associated with the core the holoenzyme is formed, which can initiate transcription.

It carries out the reaction RNA(n) + a ribonucleoside 5'-triphosphate = RNA(n+1) + diphosphate. Its function is as follows. Promotes RNA polymerase assembly. Latches the N- and C-terminal regions of the beta' subunit thereby facilitating its interaction with the beta and alpha subunits. The polypeptide is DNA-directed RNA polymerase subunit omega (Desulforapulum autotrophicum (strain ATCC 43914 / DSM 3382 / VKM B-1955 / HRM2) (Desulfobacterium autotrophicum)).